The primary structure comprises 114 residues: Large ribosomal subunit protein uL22 (114 aa).

It belongs to the universal ribosomal protein uL22 family. In terms of assembly, part of the 50S ribosomal subunit.

In terms of biological role, this protein binds specifically to 23S rRNA; its binding is stimulated by other ribosomal proteins, e.g. L4, L17, and L20. It is important during the early stages of 50S assembly. It makes multiple contacts with different domains of the 23S rRNA in the assembled 50S subunit and ribosome. The globular domain of the protein is located near the polypeptide exit tunnel on the outside of the subunit, while an extended beta-hairpin is found that lines the wall of the exit tunnel in the center of the 70S ribosome. The sequence is that of Large ribosomal subunit protein uL22 from Desulfosudis oleivorans (strain DSM 6200 / JCM 39069 / Hxd3) (Desulfococcus oleovorans).